A 195-amino-acid polypeptide reads, in one-letter code: MIISLTGGIGVGKSFVANCFQEFGAVVFDADSVVHQLYKVDKSIISYAEKNFPGVVVNGEIDRTVLSKYFLAYDENWKQFQSLVHSAVLRELEFFIAKEKKIDRKLLVLDVPLLLETKFYLYCDLIVFVHADSVVQAQRLNERNIDKEKLNLISDVQLSIEEKRKMSDFIIDTSVSKEYVFSQVKDIVDSLNLNT.

A DPCK domain is found at 2–195 (IISLTGGIGV…DIVDSLNLNT (194 aa)). 10-15 (GVGKSF) serves as a coordination point for ATP.

The protein belongs to the CoaE family.

The protein resides in the cytoplasm. It carries out the reaction 3'-dephospho-CoA + ATP = ADP + CoA + H(+). Its pathway is cofactor biosynthesis; coenzyme A biosynthesis; CoA from (R)-pantothenate: step 5/5. Its function is as follows. Catalyzes the phosphorylation of the 3'-hydroxyl group of dephosphocoenzyme A to form coenzyme A. The sequence is that of Dephospho-CoA kinase from Wolbachia pipientis wMel.